The sequence spans 1136 residues: Carbamoyl phosphate synthase large chain (1136 aa).

A carboxyphosphate synthetic domain region spans residues 1–402; that stretch reads MPKRTDIKSV…SLGKAMRSID (402 aa). ATP contacts are provided by R129, R169, G175, G176, E208, I210, E215, G241, V242, H243, Q285, and E299. One can recognise an ATP-grasp 1 domain in the interval 133 to 328; sequence KKVVKEAGAE…IAKIATKLAL (196 aa). The Mg(2+) site is built by Q285, E299, and N301. Mn(2+)-binding residues include Q285, E299, and N301. The oligomerization domain stretch occupies residues 403–551; the sequence is KRHMGFSWDG…YYYSCYADET (149 aa). The carbamoyl phosphate synthetic domain stretch occupies residues 552 to 962; that stretch reads ELRKREREAV…AFAKSQLASY (411 aa). One can recognise an ATP-grasp 2 domain in the interval 681 to 881; it reads GEVLRQEHLN…LAKAAARIMA (201 aa). Positions 717, 765, 767, 772, 797, 798, 799, 800, 840, and 852 each coordinate ATP. Mg(2+) is bound by residues Q840, E852, and N854. Mn(2+) is bound by residues Q840, E852, and N854. Residues 963 to 1136 are allosteric domain; the sequence is EGGLPTNGNV…KEEGEEARAQ (174 aa). The MGS-like domain occupies 964–1122; that stretch reads GGLPTNGNVF…QEHSRELYEL (159 aa).

The protein belongs to the CarB family. As to quaternary structure, composed of two chains; the small (or glutamine) chain promotes the hydrolysis of glutamine to ammonia, which is used by the large (or ammonia) chain to synthesize carbamoyl phosphate. Tetramer of heterodimers (alpha,beta)4. Requires Mg(2+) as cofactor. It depends on Mn(2+) as a cofactor.

It carries out the reaction hydrogencarbonate + L-glutamine + 2 ATP + H2O = carbamoyl phosphate + L-glutamate + 2 ADP + phosphate + 2 H(+). The enzyme catalyses hydrogencarbonate + NH4(+) + 2 ATP = carbamoyl phosphate + 2 ADP + phosphate + 2 H(+). Its pathway is amino-acid biosynthesis; L-arginine biosynthesis; carbamoyl phosphate from bicarbonate: step 1/1. It functions in the pathway pyrimidine metabolism; UMP biosynthesis via de novo pathway; (S)-dihydroorotate from bicarbonate: step 1/3. Its function is as follows. Large subunit of the glutamine-dependent carbamoyl phosphate synthetase (CPSase). CPSase catalyzes the formation of carbamoyl phosphate from the ammonia moiety of glutamine, carbonate, and phosphate donated by ATP, constituting the first step of 2 biosynthetic pathways, one leading to arginine and/or urea and the other to pyrimidine nucleotides. The large subunit (synthetase) binds the substrates ammonia (free or transferred from glutamine from the small subunit), hydrogencarbonate and ATP and carries out an ATP-coupled ligase reaction, activating hydrogencarbonate by forming carboxy phosphate which reacts with ammonia to form carbamoyl phosphate. The sequence is that of Carbamoyl phosphate synthase large chain from Bifidobacterium animalis subsp. lactis (strain AD011).